The following is a 219-amino-acid chain: Capsid protein (219 aa).

Positions 5-29 are nuclear localization signals; sequence RRRRVVRRRKPVRRLRRRRRRFFKR.

The protein belongs to the circoviridae capsid protein family. In terms of assembly, homomultimer. Assembles in the nucleus, presumably in an immature form, then migrates to the cytoplasm once assembled as mature virion. Interacts with Rep; this interaction relocates Rep into the nucleus.

Its subcellular location is the host nucleus. The protein localises to the virion. In terms of biological role, self-assembles to form the virion icosahedral capsid with a T=1 symmetry. This very small capsid (17-22 nm in diameter) allows the virus to be very stable in the environment and resistant to some disinfectants, including detergents. Essential for the initial attachment to heparan sulfate moieties and chondroitin sulfate B of the host cell surface proteoglycans. After attachment, the virus is endocytosed and traffics to the nucleus. The capsid protein binds and transports the viral genome and Rep across the nuclear envelope. This Homo sapiens (Human) protein is Capsid protein (Cap).